Consider the following 160-residue polypeptide: Phosphopantetheine adenylyltransferase (160 aa).

Thr10 provides a ligand contact to substrate. Residues 10–11 (TF) and His18 contribute to the ATP site. Substrate is bound by residues Lys42, Met74, and Arg88. ATP is bound by residues 89–91 (GVR), Glu99, and 124–130 (WSYISST).

Belongs to the bacterial CoaD family. As to quaternary structure, homohexamer. It depends on Mg(2+) as a cofactor.

It localises to the cytoplasm. The catalysed reaction is (R)-4'-phosphopantetheine + ATP + H(+) = 3'-dephospho-CoA + diphosphate. Its pathway is cofactor biosynthesis; coenzyme A biosynthesis; CoA from (R)-pantothenate: step 4/5. Reversibly transfers an adenylyl group from ATP to 4'-phosphopantetheine, yielding dephospho-CoA (dPCoA) and pyrophosphate. The sequence is that of Phosphopantetheine adenylyltransferase from Sodalis glossinidius (strain morsitans).